Here is a 420-residue protein sequence, read N- to C-terminus: Diphosphomevalonate decarboxylase 2 (420 aa).

25–28 contacts (R)-5-diphosphomevalonate; that stretch reads YWGK. The Peroxisomal targeting signal PTS2 signature appears at 42–50; it reads SVTLDPDHL. (R)-5-diphosphomevalonate contacts are provided by residues R80, 163–168, and T219; that span reads SGSACR.

Belongs to the diphosphomevalonate decarboxylase family. In terms of assembly, homodimer.

The protein localises to the peroxisome. The catalysed reaction is (R)-5-diphosphomevalonate + ATP = isopentenyl diphosphate + ADP + phosphate + CO2. Its pathway is isoprenoid biosynthesis; isopentenyl diphosphate biosynthesis via mevalonate pathway; isopentenyl diphosphate from (R)-mevalonate: step 3/3. In terms of biological role, performs the first committed step in the biosynthesis of isoprene-containing compounds such as sterols and terpenoids. Component of the triterpenes (e.g. ginsenosides or panaxosides) and phytosterols biosynthetic pathways. Promotes the accumulation of stigmasterol and beta-sitosterol. The polypeptide is Diphosphomevalonate decarboxylase 2 (Panax ginseng (Korean ginseng)).